The chain runs to 185 residues: Elongation factor P (185 aa).

This sequence belongs to the elongation factor P family.

It is found in the cytoplasm. Its pathway is protein biosynthesis; polypeptide chain elongation. In terms of biological role, involved in peptide bond synthesis. Stimulates efficient translation and peptide-bond synthesis on native or reconstituted 70S ribosomes in vitro. Probably functions indirectly by altering the affinity of the ribosome for aminoacyl-tRNA, thus increasing their reactivity as acceptors for peptidyl transferase. In Clostridium perfringens (strain ATCC 13124 / DSM 756 / JCM 1290 / NCIMB 6125 / NCTC 8237 / Type A), this protein is Elongation factor P.